The sequence spans 199 residues: Dephospho-CoA kinase (199 aa).

The 197-residue stretch at Ile-3–Ala-199 folds into the DPCK domain. Gly-11 to Thr-16 is a binding site for ATP.

The protein belongs to the CoaE family.

The protein localises to the cytoplasm. It catalyses the reaction 3'-dephospho-CoA + ATP = ADP + CoA + H(+). The protein operates within cofactor biosynthesis; coenzyme A biosynthesis; CoA from (R)-pantothenate: step 5/5. In terms of biological role, catalyzes the phosphorylation of the 3'-hydroxyl group of dephosphocoenzyme A to form coenzyme A. In Rhodopseudomonas palustris (strain BisB18), this protein is Dephospho-CoA kinase.